We begin with the raw amino-acid sequence, 184 residues long: Ribosome-recycling factor (184 aa).

It belongs to the RRF family.

The protein resides in the cytoplasm. In terms of biological role, responsible for the release of ribosomes from messenger RNA at the termination of protein biosynthesis. May increase the efficiency of translation by recycling ribosomes from one round of translation to another. This Caldicellulosiruptor bescii (strain ATCC BAA-1888 / DSM 6725 / KCTC 15123 / Z-1320) (Anaerocellum thermophilum) protein is Ribosome-recycling factor.